We begin with the raw amino-acid sequence, 125 residues long: Large ribosomal subunit protein bL12 (125 aa).

This sequence belongs to the bacterial ribosomal protein bL12 family. As to quaternary structure, homodimer. Part of the ribosomal stalk of the 50S ribosomal subunit. Forms a multimeric L10(L12)X complex, where L10 forms an elongated spine to which 2 to 4 L12 dimers bind in a sequential fashion. Binds GTP-bound translation factors.

Functionally, forms part of the ribosomal stalk which helps the ribosome interact with GTP-bound translation factors. Is thus essential for accurate translation. This is Large ribosomal subunit protein bL12 from Rickettsia canadensis (strain McKiel).